A 238-amino-acid polypeptide reads, in one-letter code: DNA repair protein RecO (238 aa).

The protein belongs to the RecO family.

In terms of biological role, involved in DNA repair and RecF pathway recombination. This is DNA repair protein RecO from Cereibacter sphaeroides (strain ATCC 17023 / DSM 158 / JCM 6121 / CCUG 31486 / LMG 2827 / NBRC 12203 / NCIMB 8253 / ATH 2.4.1.) (Rhodobacter sphaeroides).